We begin with the raw amino-acid sequence, 336 residues long: UPF0324 membrane protein lp_2841 (336 aa).

A run of 9 helical transmembrane segments spans residues Gly-5 to Gly-22, Phe-26 to Leu-48, Ile-84 to Leu-106, Val-116 to Val-138, Ile-150 to Phe-172, Thr-204 to Phe-226, Trp-255 to Gly-277, Thr-282 to Phe-304, and Leu-311 to Leu-333.

It belongs to the UPF0324 family.

The protein localises to the cell membrane. In Lactiplantibacillus plantarum (strain ATCC BAA-793 / NCIMB 8826 / WCFS1) (Lactobacillus plantarum), this protein is UPF0324 membrane protein lp_2841.